The sequence spans 636 residues: Rik1-associated factor 2 (636 aa).

Component of the Clr4 methyltransferase complex (ClrC) composed of at least clr4, rik1, pcu4, rbx1, raf1 and raf2. The cullin pcu4, rik1, raf1, raf2 and the ring-box protein rbx1 are components of an E3 ubiquitin ligase, whose activity is essential for heterochromatin assembly. Interacts with pcu4.

It is found in the cytoplasm. It localises to the mitochondrion. Its subcellular location is the nucleus. The protein resides in the chromosome. Component of the Clr4 methyltransferase complex (ClrC) which contributes to the establishment of heterochromatin by specifically methylating histone H3 to form H3K9me. ClrC preferentially ubiquitylates H3K14 and ClrC-mediated H3 ubiquitination promotes clr4 methyltransferase activity for the methylation of H3K9. H3K9me represents a specific tag for epigenetic transcriptional repression by recruiting swi6/HP1 to methylated histones which leads to transcriptional silencing within centromeric heterochromatin, telomeric regions and at the silent mating-type loci. Has a role in both mitotic and meiotic chromosome segregation. In Schizosaccharomyces pombe (strain 972 / ATCC 24843) (Fission yeast), this protein is Rik1-associated factor 2 (raf2).